Reading from the N-terminus, the 85-residue chain is Putative membrane protein insertion efficiency factor (85 aa).

This sequence belongs to the UPF0161 family.

Its subcellular location is the cell inner membrane. Its function is as follows. Could be involved in insertion of integral membrane proteins into the membrane. In Vibrio cholerae serotype O1 (strain ATCC 39315 / El Tor Inaba N16961), this protein is Putative membrane protein insertion efficiency factor.